The chain runs to 293 residues: Ribosomal protein L11 methyltransferase (293 aa).

The S-adenosyl-L-methionine site is built by Thr-145, Gly-166, Asp-188, and Asn-230.

The protein belongs to the methyltransferase superfamily. PrmA family.

Its subcellular location is the cytoplasm. The enzyme catalyses L-lysyl-[protein] + 3 S-adenosyl-L-methionine = N(6),N(6),N(6)-trimethyl-L-lysyl-[protein] + 3 S-adenosyl-L-homocysteine + 3 H(+). Functionally, methylates ribosomal protein L11. The protein is Ribosomal protein L11 methyltransferase of Citrobacter koseri (strain ATCC BAA-895 / CDC 4225-83 / SGSC4696).